We begin with the raw amino-acid sequence, 798 residues long: Integrin beta-1-A (798 aa).

The first 21 residues, 1 to 21, serve as a signal peptide directing secretion; that stretch reads MAHYPVFTVGLLTCLVLCINA. The Extracellular portion of the chain corresponds to 22–727; that stretch reads QQGGTECLKA…VKEPECPSGP (706 aa). Residues 27–77 form the PSI domain; that stretch reads ECLKANAKSCGECIQAGPNCGWCTKVDFLQEGEPTSARCDDLAALKSKGCP. Intrachain disulfides connect Cys-28–Cys-46, Cys-36–Cys-464, Cys-39–Cys-65, Cys-49–Cys-76, Cys-206–Cys-212, Cys-260–Cys-300, Cys-400–Cys-414, Cys-434–Cys-462, Cys-466–Cys-486, Cys-477–Cys-489, Cys-491–Cys-500, Cys-502–Cys-533, Cys-516–Cys-531, Cys-525–Cys-536, Cys-538–Cys-553, Cys-555–Cys-576, Cys-560–Cys-574, Cys-568–Cys-579, Cys-581–Cys-590, Cys-592–Cys-615, Cys-599–Cys-613, Cys-607–Cys-618, Cys-620–Cys-630, Cys-633–Cys-636, Cys-640–Cys-691, Cys-646–Cys-665, Cys-649–Cys-661, and Cys-699–Cys-723. The tract at residues 76–106 is disordered; the sequence is CPEDDIQNPRGRKQKLKDIPITSKGKGERMD. 2 N-linked (GlcNAc...) asparagine glycosylation sites follow: Asn-109 and Asn-131. The VWFA domain maps to 139-377; it reads DYPIDLYYLM…QLIIDSYNSL (239 aa). Mg(2+) is bound by residues Ser-151 and Ser-153. Residues Ser-153, Asp-156, Asp-157, and Glu-188 each coordinate Ca(2+). N-linked (GlcNAc...) asparagine glycans are attached at residues Asn-211 and Asn-223. 4 residues coordinate Ca(2+): Asn-243, Asp-245, Pro-247, and Glu-248. Glu-248 lines the Mg(2+) pocket. 2 N-linked (GlcNAc...) asparagine glycosylation sites follow: Asn-268 and Asn-362. The N-linked (GlcNAc...) asparagine glycan is linked to Asn-416. I-EGF domains are found at residues 466 to 501, 502 to 554, 555 to 591, and 592 to 631; these read CQDK…KECE, CSTD…KYCE, CDNF…SACD, and CSED…PTCE. The N-linked (GlcNAc...) asparagine glycan is linked to Asn-481. Asn-520 is a glycosylation site (N-linked (GlcNAc...) asparagine). A glycan (N-linked (GlcNAc...) asparagine) is linked at Asn-584. Asn-669 is a glycosylation site (N-linked (GlcNAc...) asparagine). Residues 728 to 751 form a helical membrane-spanning segment; it reads DIIPIVAGVVAGIVLIGLALLLIW. Topologically, residues 752–798 are cytoplasmic; that stretch reads KLLMIIHDRREFAKFEKEKMNAKWDTGENPIYKSAVTTVVNPKYEGK. The residue at position 783 (Tyr-783) is a Phosphotyrosine.

This sequence belongs to the integrin beta chain family. In terms of assembly, heterodimer of an alpha and a beta subunit.

Its subcellular location is the cell membrane. It is found in the cell projection. The protein localises to the invadopodium membrane. The protein resides in the ruffle membrane. It localises to the melanosome. Its subcellular location is the cleavage furrow. It is found in the lamellipodium. The protein localises to the ruffle. Its function is as follows. Beta integrins associate with alpha subunits to form receptor complexes that recognize the sequence R-G-D in a wide array of ligands. May be involved in osteoblast compaction. May play role in myoblast differentiation and fusion during skeletal myogenesis. This chain is Integrin beta-1-A (itgb1-a), found in Xenopus laevis (African clawed frog).